Here is a 298-residue protein sequence, read N- to C-terminus: Acetylglutamate kinase (298 aa).

Substrate contacts are provided by residues 69 to 70, R91, and N196; that span reads GG.

It belongs to the acetylglutamate kinase family. ArgB subfamily.

The protein resides in the cytoplasm. It catalyses the reaction N-acetyl-L-glutamate + ATP = N-acetyl-L-glutamyl 5-phosphate + ADP. It participates in amino-acid biosynthesis; L-arginine biosynthesis; N(2)-acetyl-L-ornithine from L-glutamate: step 2/4. Functionally, catalyzes the ATP-dependent phosphorylation of N-acetyl-L-glutamate. This chain is Acetylglutamate kinase, found in Rhodopseudomonas palustris (strain TIE-1).